The sequence spans 1202 residues: DNA polymerase beta (1202 aa).

3 consecutive repeat copies span residues 1071-1074 (AGNP), 1075-1078 (AGNP), and 1079-1082 (AGNA). The 3 X 4 AA tandem repeats of A-G-[NK]-[PA] stretch occupies residues 1071–1082 (AGNPAGNPAGNA).

Belongs to the DNA polymerase type-B family.

The enzyme catalyses DNA(n) + a 2'-deoxyribonucleoside 5'-triphosphate = DNA(n+1) + diphosphate. DNA-directed DNA polymerase involved in viral DNA replication. In Ornithodoros (relapsing fever ticks), this protein is DNA polymerase beta (DPOL).